The primary structure comprises 202 residues: Small ribosomal subunit protein uS4 (202 aa).

An S4 RNA-binding domain is found at 93-156 (RRLDNMVYRL…KDLKIISEAV (64 aa)).

This sequence belongs to the universal ribosomal protein uS4 family. In terms of assembly, part of the 30S ribosomal subunit. Contacts protein S5. The interaction surface between S4 and S5 is involved in control of translational fidelity.

In terms of biological role, one of the primary rRNA binding proteins, it binds directly to 16S rRNA where it nucleates assembly of the body of the 30S subunit. Its function is as follows. With S5 and S12 plays an important role in translational accuracy. The chain is Small ribosomal subunit protein uS4 from Pediococcus pentosaceus (strain ATCC 25745 / CCUG 21536 / LMG 10740 / 183-1w).